The sequence spans 405 residues: Protochlorophyllide reductase A, chloroplastic (405 aa).

A chloroplast-targeting transit peptide spans 1–69; the sequence is MALQAASLVS…LRNNKAIIRA (69 aa).

Belongs to the short-chain dehydrogenases/reductases (SDR) family. POR subfamily. Forms large complexes including TOC33, pPORA and OEP161 during pPORA import into plastids at the plastid envelope membrane. Interacts with CPP1 during plastid import. In terms of tissue distribution, expressed in young seedlings. Not detected in leaves.

It is found in the plastid. The protein resides in the chloroplast. The enzyme catalyses chlorophyllide a + NADP(+) = protochlorophyllide a + NADPH + H(+). It functions in the pathway porphyrin-containing compound metabolism; chlorophyll biosynthesis. Functionally, phototransformation of protochlorophyllide (Pchlide) to chlorophyllide (Chlide). PORA may also function as a photoprotectant during the transitory stage from dark to light. Functions in skotomorphogenesis, photomorphogenesis and throughout the plant life under specific light conditions. The sequence is that of Protochlorophyllide reductase A, chloroplastic (PORA) from Arabidopsis thaliana (Mouse-ear cress).